We begin with the raw amino-acid sequence, 232 residues long: UPF0235 protein At5g63440 (232 aa).

It belongs to the UPF0235 family. As to quaternary structure, interacts with CTN.

Its subcellular location is the nucleus speckle. Its function is as follows. May play a role during early embryonic development. Probably involved in pre-mRNA splicing. This Arabidopsis thaliana (Mouse-ear cress) protein is UPF0235 protein At5g63440.